A 195-amino-acid polypeptide reads, in one-letter code: 3-isopropylmalate dehydratase small subunit (195 aa).

The protein belongs to the LeuD family. LeuD type 1 subfamily. Heterodimer of LeuC and LeuD.

It catalyses the reaction (2R,3S)-3-isopropylmalate = (2S)-2-isopropylmalate. The protein operates within amino-acid biosynthesis; L-leucine biosynthesis; L-leucine from 3-methyl-2-oxobutanoate: step 2/4. Its function is as follows. Catalyzes the isomerization between 2-isopropylmalate and 3-isopropylmalate, via the formation of 2-isopropylmaleate. This Salinispora arenicola (strain CNS-205) protein is 3-isopropylmalate dehydratase small subunit.